A 129-amino-acid polypeptide reads, in one-letter code: Protein GLUTAMINE DUMPER 2 (129 aa).

The Extracellular portion of the chain corresponds to 1–34 (MQTMEGRQYNYQDSINASSSMVVPHSPWHSPVPY). Residues 35–55 (LFGGLAAMLALICVALLILAC) form a helical membrane-spanning segment. Over 56–129 (SYWRLSGSAE…DHNEEEGRRG (74 aa)) the chain is Cytoplasmic. Residues 66-89 (RDLEAGDDAKPDNDTNKTKHTEMP) form a disordered region. The short motif at 94 to 98 (VIMAG) is the VIMAG element. The interval 106–129 (ATPATRSEQSCTCGDHNEEEGRRG) is disordered. The segment covering 120–129 (DHNEEEGRRG) has biased composition (basic and acidic residues).

It belongs to the GLUTAMINE DUMPER 1 (TC 9.B.60) family. Expressed in the vascular tissues.

Its subcellular location is the membrane. Its function is as follows. Probable subunit of an amino acid transporter involved in the regulation of the amino acid metabolism. Stimulates amino acid export by activating nonselective amino acid facilitators. The polypeptide is Protein GLUTAMINE DUMPER 2 (GDU2) (Arabidopsis thaliana (Mouse-ear cress)).